The following is a 428-amino-acid chain: Glial fibrillary acidic protein (428 aa).

Residues 1–68 form a head region; that stretch reads MERRRVTSAT…KETRASERAE (68 aa). A Phosphothreonine; by AURKB and ROCK1 modification is found at threonine 7. The residue at position 12 (arginine 12) is an Omega-N-methylarginine. Serine 13 is subject to Phosphoserine; by AURKB and ROCK1. 2 positions are modified to citrulline: arginine 26 and arginine 32. Serine 34 carries the post-translational modification Phosphoserine; by AURKB and ROCK1. In terms of domain architecture, IF rod spans 65–373; it reads ERAEMMELND…KLLEGEENRI (309 aa). Residues 69–100 are coil 1A; that stretch reads MMELNDRFASYIEKVRFLEQQNKALAAELNQL. Serine 78 bears the Phosphoserine mark. The interval 101 to 111 is linker 1; it reads RAKEPTKLADV. A phosphothreonine mark is found at threonine 106 and threonine 146. Positions 112 to 210 are coil 1B; the sequence is YQAELRELRL…EEEVRELQEQ (99 aa). The tract at residues 211–226 is linker 12; sequence LAQQQVHVEMDVAKPD. Residues 227-248 are coil 2A; that stretch reads LTAALREIRTQYEAVASSNMHE. A linker 2 region spans residues 249–252; sequence AEEW. The tract at residues 253-373 is coil 2B; sequence YRSKFADLND…KLLEGEENRI (121 aa). At arginine 266 the chain carries Citrulline. Phosphoserine is present on serine 319. The tract at residues 374-428 is tail; sequence TIPVQTFSNLQIRETSLDTKSVSEGHLKRNIVVKTVEMRDGEVIKESKQEHKDVM. Threonine 379 is subject to Phosphothreonine. Position 381 is a phosphoserine (serine 381). Arginine 402 and arginine 412 each carry citrulline.

It belongs to the intermediate filament family. In terms of assembly, interacts with SYNM. In terms of processing, phosphorylated by PKN1.

It is found in the cytoplasm. In terms of biological role, GFAP, a class-III intermediate filament, is a cell-specific marker that, during the development of the central nervous system, distinguishes astrocytes from other glial cells. The chain is Glial fibrillary acidic protein (GFAP) from Bos taurus (Bovine).